We begin with the raw amino-acid sequence, 101 residues long: Large ribosomal subunit protein uL24 (101 aa).

This sequence belongs to the universal ribosomal protein uL24 family. Part of the 50S ribosomal subunit.

Functionally, one of two assembly initiator proteins, it binds directly to the 5'-end of the 23S rRNA, where it nucleates assembly of the 50S subunit. Its function is as follows. One of the proteins that surrounds the polypeptide exit tunnel on the outside of the subunit. The protein is Large ribosomal subunit protein uL24 of Cereibacter sphaeroides (strain ATCC 17025 / ATH 2.4.3) (Rhodobacter sphaeroides).